We begin with the raw amino-acid sequence, 176 residues long: Peptide deformylase (176 aa).

2 residues coordinate Fe cation: Cys94 and His136. Residue Glu137 is part of the active site. His140 contributes to the Fe cation binding site.

It belongs to the polypeptide deformylase family. Fe(2+) serves as cofactor.

The catalysed reaction is N-terminal N-formyl-L-methionyl-[peptide] + H2O = N-terminal L-methionyl-[peptide] + formate. Its function is as follows. Removes the formyl group from the N-terminal Met of newly synthesized proteins. Requires at least a dipeptide for an efficient rate of reaction. N-terminal L-methionine is a prerequisite for activity but the enzyme has broad specificity at other positions. The sequence is that of Peptide deformylase from Bartonella henselae (strain ATCC 49882 / DSM 28221 / CCUG 30454 / Houston 1) (Rochalimaea henselae).